The chain runs to 187 residues: Large ribosomal subunit protein uL6c (187 aa).

The protein belongs to the universal ribosomal protein uL6 family. As to quaternary structure, part of the 50S ribosomal subunit.

It is found in the plastid. It localises to the chloroplast. Its function is as follows. Binds 23S rRNA. The sequence is that of Large ribosomal subunit protein uL6c (rpl6) from Thalassiosira pseudonana (Marine diatom).